Reading from the N-terminus, the 425-residue chain is 5'-deoxyadenosine deaminase (425 aa).

Zn(2+)-binding residues include His62 and His64. Substrate-binding residues include Glu91 and His183. His210 lines the Zn(2+) pocket. The substrate site is built by Glu213 and Asp298. Asp298 serves as a coordination point for Zn(2+).

It belongs to the metallo-dependent hydrolases superfamily. MTA/SAH deaminase family. As to quaternary structure, homotetramer. Zn(2+) is required as a cofactor.

It carries out the reaction 5'-deoxyadenosine + H2O + H(+) = 5'-deoxyinosine + NH4(+). It catalyses the reaction S-adenosyl-L-homocysteine + H2O + H(+) = S-inosyl-L-homocysteine + NH4(+). The enzyme catalyses S-methyl-5'-thioadenosine + H2O + H(+) = S-methyl-5'-thioinosine + NH4(+). The catalysed reaction is adenosine + H2O + H(+) = inosine + NH4(+). It participates in amino-acid biosynthesis; S-adenosyl-L-methionine biosynthesis. Catalyzes the deamination of three SAM-derived enzymatic products, namely 5'-deoxyadenosine, S-adenosyl-L-homocysteine, and 5'-methylthioadenosine, to produce the inosine analogs. Can also deaminate adenosine. The preferred substrate for this enzyme is 5'-deoxyadenosine, but all these substrates are efficiently deaminated. Likely functions in a S-adenosyl-L-methionine (SAM) recycling pathway from S-adenosyl-L-homocysteine (SAH) produced from SAM-dependent methylation reactions. May also be involved in the recycling of 5'-deoxyadenosine, whereupon the 5'-deoxyribose moiety of 5'-deoxyinosine is further metabolized to deoxyhexoses used for the biosynthesis of aromatic amino acids in methanogens. The polypeptide is 5'-deoxyadenosine deaminase (Methanosphaera stadtmanae (strain ATCC 43021 / DSM 3091 / JCM 11832 / MCB-3)).